The following is a 308-amino-acid chain: Ribonuclease HIII (308 aa).

One can recognise an RNase H type-2 domain in the interval Lys91–Lys308. A divalent metal cation is bound by residues Asp97, Glu98, and Asp202.

It belongs to the RNase HII family. RnhC subfamily. The cofactor is Mn(2+). Mg(2+) serves as cofactor.

The protein localises to the cytoplasm. The catalysed reaction is Endonucleolytic cleavage to 5'-phosphomonoester.. Its function is as follows. Endonuclease that specifically degrades the RNA of RNA-DNA hybrids. The chain is Ribonuclease HIII from Listeria monocytogenes serotype 4b (strain F2365).